The primary structure comprises 780 residues: Protein phosphatase 1 regulatory subunit 21 (780 aa).

2 coiled-coil regions span residues 1-207 (MASA…LKTL) and 556-607 (ESRE…LKNT). Positions 84–104 (EPRGKKNKKSGESSSQLSQEQ) are disordered. A compositionally biased stretch (low complexity) spans 95–104 (ESSSQLSQEQ). A Phosphothreonine modification is found at threonine 652. Residues 693–742 (YAECRALSKRLALAEKSKEALTEEMKLASQNISRLQDELTTTKRSYEDQL) adopt a coiled-coil conformation. A disordered region spans residues 760-780 (REEIDTLKMSSKGNSKKNKSR).

In terms of assembly, component of the FERRY complex, composed of five subunits: TBCK, PPP1R21, FERRY3, CRYZL1 and GATAD1, with a ratio of 1:2:1:2:4 respectively. PPP1R21 serves as a binding hub connecting all five complex subunits to mediate the binding to specific mitochondrial mRNAs. Interacts with the GTP-bound form of RAB5A (via its C-terminal region); linking the mRNP complex onto trafficking endosomes for active mRNA transport. Interacts with PPP1CA.

It is found in the early endosome. Functionally, component of the FERRY complex (Five-subunit Endosomal Rab5 and RNA/ribosome intermediary). The FERRY complex directly interacts with mRNAs and RAB5A, and functions as a RAB5A effector involved in the localization and the distribution of specific mRNAs most likely by mediating their endosomal transport. The complex recruits mRNAs and ribosomes to early endosomes through direct mRNA-interaction. In the complex, PPP1R21 serves as a binding hub connecting all five complex subunits and mediating the binding to mRNA and early endosomes via RAB5A. Putative regulator of protein phosphatase 1 (PP1) activity. May play a role in the endosomal sorting process or in endosome maturation pathway. The sequence is that of Protein phosphatase 1 regulatory subunit 21 (PPP1R21) from Homo sapiens (Human).